A 297-amino-acid polypeptide reads, in one-letter code: Bifunctional protein FolD 1 (297 aa).

Residues 174–176, Ser-199, and Ile-240 contribute to the NADP(+) site; that span reads GRS.

Belongs to the tetrahydrofolate dehydrogenase/cyclohydrolase family. In terms of assembly, homodimer.

The enzyme catalyses (6R)-5,10-methylene-5,6,7,8-tetrahydrofolate + NADP(+) = (6R)-5,10-methenyltetrahydrofolate + NADPH. The catalysed reaction is (6R)-5,10-methenyltetrahydrofolate + H2O = (6R)-10-formyltetrahydrofolate + H(+). The protein operates within one-carbon metabolism; tetrahydrofolate interconversion. Catalyzes the oxidation of 5,10-methylenetetrahydrofolate to 5,10-methenyltetrahydrofolate and then the hydrolysis of 5,10-methenyltetrahydrofolate to 10-formyltetrahydrofolate. The sequence is that of Bifunctional protein FolD 1 from Acinetobacter baylyi (strain ATCC 33305 / BD413 / ADP1).